The chain runs to 340 residues: N-acetyl-gamma-glutamyl-phosphate reductase (340 aa).

Cys-146 is an active-site residue.

This sequence belongs to the NAGSA dehydrogenase family. Type 1 subfamily.

Its subcellular location is the cytoplasm. It catalyses the reaction N-acetyl-L-glutamate 5-semialdehyde + phosphate + NADP(+) = N-acetyl-L-glutamyl 5-phosphate + NADPH + H(+). It functions in the pathway amino-acid biosynthesis; L-arginine biosynthesis; N(2)-acetyl-L-ornithine from L-glutamate: step 3/4. Functionally, catalyzes the NADPH-dependent reduction of N-acetyl-5-glutamyl phosphate to yield N-acetyl-L-glutamate 5-semialdehyde. This is N-acetyl-gamma-glutamyl-phosphate reductase from Streptococcus thermophilus (strain CNRZ 1066).